We begin with the raw amino-acid sequence, 86 residues long: Putative membrane protein insertion efficiency factor (86 aa).

Belongs to the UPF0161 family.

It is found in the cell inner membrane. Could be involved in insertion of integral membrane proteins into the membrane. In Ruegeria sp. (strain TM1040) (Silicibacter sp.), this protein is Putative membrane protein insertion efficiency factor.